The chain runs to 225 residues: Acidic leucine-rich nuclear phosphoprotein 32-related protein 2 (225 aa).

LRR repeat units follow at residues 39 to 60, 61 to 82, and 87 to 107; these read KLEL…PVLP, ALNY…DVLI, and EIKK…RTLK. Residues 121–161 form the LRRCT domain; that stretch reads SSLGLLDDYRVKMFEMIPSLKILDGCDVDGEEVEEEFAAGE. Positions 155–175 are enriched in acidic residues; it reads EEFAAGEGAEDSDEGDSDEDG. The interval 155 to 225 is disordered; the sequence is EEFAAGEGAE…DEPEAKKSAE (71 aa).

It belongs to the ANP32 family.

The sequence is that of Acidic leucine-rich nuclear phosphoprotein 32-related protein 2 from Caenorhabditis elegans.